The chain runs to 332 residues: Probable isoaspartyl peptidase/L-asparaginase CG7860 (332 aa).

Thr-188 functions as the Nucleophile in the catalytic mechanism. Substrate is bound by residues 216–219 (RIGD) and 239–242 (TGHG).

Belongs to the Ntn-hydrolase family. Heterodimer of an alpha and beta chain produced by autocleavage. In terms of processing, cleaved into an alpha and beta chain by autocatalysis; this activates the enzyme. The N-terminal residue of the beta subunit is responsible for the nucleophile hydrolase activity.

The enzyme catalyses L-asparagine + H2O = L-aspartate + NH4(+). It carries out the reaction Cleavage of a beta-linked Asp residue from the N-terminus of a polypeptide.. In terms of biological role, has both L-asparaginase and beta-aspartyl peptidase activity. Does not have aspartylglucosaminidase activity and is inactive toward GlcNAc-L-Asn. Likewise, has no activity toward glutamine. The chain is Probable isoaspartyl peptidase/L-asparaginase CG7860 from Drosophila melanogaster (Fruit fly).